The chain runs to 286 residues: Glycine--tRNA ligase alpha subunit (286 aa).

The protein belongs to the class-II aminoacyl-tRNA synthetase family. Tetramer of two alpha and two beta subunits.

The protein localises to the cytoplasm. It catalyses the reaction tRNA(Gly) + glycine + ATP = glycyl-tRNA(Gly) + AMP + diphosphate. In Thermotoga petrophila (strain ATCC BAA-488 / DSM 13995 / JCM 10881 / RKU-1), this protein is Glycine--tRNA ligase alpha subunit.